Consider the following 129-residue polypeptide: Glycine cleavage system H protein (129 aa).

One can recognise a Lipoyl-binding domain in the interval 24-106 (VFTVGISEHA…YGDGWLFKIK (83 aa)). Position 65 is an N6-lipoyllysine (lysine 65).

This sequence belongs to the GcvH family. The glycine cleavage system is composed of four proteins: P, T, L and H. Requires (R)-lipoate as cofactor.

Functionally, the glycine cleavage system catalyzes the degradation of glycine. The H protein shuttles the methylamine group of glycine from the P protein to the T protein. The protein is Glycine cleavage system H protein of Alteromonas mediterranea (strain DSM 17117 / CIP 110805 / LMG 28347 / Deep ecotype).